Reading from the N-terminus, the 417-residue chain is Monooxygenase cfoF (417 aa).

FAD is bound by residues 45 to 48 (DRDK), Arg-126, and Asp-327. Residues 389–399 (AHTTQLDRDQF) show a composition bias toward basic and acidic residues. The interval 389–417 (AHTTQLDRDQFTDGSGANDFLVGQQHSDK) is disordered.

It belongs to the aromatic-ring hydroxylase family. KMO subfamily. Requires FAD as cofactor.

It participates in secondary metabolite biosynthesis; flavonoid biosynthesis. Monooxygenase; part of the gene cluster that mediates the biosynthesis of chlorflavonin, a fungal flavonoid with acetolactate synthase inhibitory activity. Within the pathway, cfoF is responsible for the hydroxylation of the flavonoid skeleton at position C3. The pathway begins with the PKS-NRPS hybrid synthetase cfoA that uses benzoic acid or p-hydroxybenzoic acid as a starter unit with four rounds of chain elongation using malonyl-CoA to form the chalcone skeleton. Then, a new type of chalcone isomerase, cfoK, catalyzes the conversion of the chalcone into a flavanone by a histidine-mediated oxa-Michael addition mechanism. The desaturation of flavanone to flavone is catalyzed by a new type of flavone synthase, the flavin mononucleotide (FMN)-dependent oxidoreductase cfoJ. Monooxygenases cfoF, cfoG, and P450 cfoH are responsible for the hydroxylation of the flavonoid skeleton at sites C3, C8, and C2', respectively. Like cfoF, the dehydratase cfoI plays also a role in the hydroxylation of position C3. Methyltransferases cfoB, cfoC, and cfoD then catalyze the methylation of C7-OH, C8-OH, and C3-OH, respectively. Finally, the monooxygenase cfoE is responsible for the chlorination of flavonoid at position C3'. In Aspergillus candidus, this protein is Monooxygenase cfoF.